A 216-amino-acid chain; its full sequence is Ribonuclease HII (216 aa).

Positions 33-216 constitute an RNase H type-2 domain; that stretch reads WPVAGADEAG…RMSFRPFRQV (184 aa). Residues Asp-39, Glu-40, and Asp-130 each coordinate a divalent metal cation.

Belongs to the RNase HII family. Requires Mn(2+) as cofactor. Mg(2+) serves as cofactor.

The protein localises to the cytoplasm. The enzyme catalyses Endonucleolytic cleavage to 5'-phosphomonoester.. Its function is as follows. Endonuclease that specifically degrades the RNA of RNA-DNA hybrids. This Rhizobium meliloti (strain 1021) (Ensifer meliloti) protein is Ribonuclease HII.